A 167-amino-acid polypeptide reads, in one-letter code: Glucose-6-phosphate isomerase (167 aa).

Residue E54 is the Proton donor of the active site. H85 is a catalytic residue.

It belongs to the GPI family.

The protein localises to the cytoplasm. It carries out the reaction alpha-D-glucose 6-phosphate = beta-D-fructose 6-phosphate. The protein operates within carbohydrate biosynthesis; gluconeogenesis. It participates in carbohydrate degradation; glycolysis; D-glyceraldehyde 3-phosphate and glycerone phosphate from D-glucose: step 2/4. Functionally, catalyzes the reversible isomerization of glucose-6-phosphate to fructose-6-phosphate. This is Glucose-6-phosphate isomerase from Klebsiella oxytoca.